The sequence spans 270 residues: GTP cyclohydrolase FolE2 (270 aa).

This sequence belongs to the GTP cyclohydrolase IV family.

It catalyses the reaction GTP + H2O = 7,8-dihydroneopterin 3'-triphosphate + formate + H(+). It participates in cofactor biosynthesis; 7,8-dihydroneopterin triphosphate biosynthesis; 7,8-dihydroneopterin triphosphate from GTP: step 1/1. In terms of biological role, converts GTP to 7,8-dihydroneopterin triphosphate. In Cupriavidus pinatubonensis (strain JMP 134 / LMG 1197) (Cupriavidus necator (strain JMP 134)), this protein is GTP cyclohydrolase FolE2.